The primary structure comprises 173 residues: Ribosome maturation factor RimP (173 aa).

The protein belongs to the RimP family.

Its subcellular location is the cytoplasm. Functionally, required for maturation of 30S ribosomal subunits. The protein is Ribosome maturation factor RimP of Chlorobium phaeobacteroides (strain DSM 266 / SMG 266 / 2430).